Here is a 158-residue protein sequence, read N- to C-terminus: Secreted frizzled-related protein 1 (158 aa).

In terms of domain architecture, FZ spans 1–34; sequence VRDSCEPVMQFFGFYWPEMLKCDKFPEGDVCIAM. N-linked (GlcNAc...) asparagine glycosylation occurs at Asn-38. 2 cysteine pairs are disulfide-bonded: Cys-51/Cys-121 and Cys-68/Cys-123. Residues 51–158 enclose the NTR domain; sequence CPPCDNELKS…IHKWDKKNKE (108 aa).

Belongs to the secreted frizzled-related protein (sFRP) family. In terms of assembly, interacts with WNT4, WNT1, WNT2, WNT8, MYOC and FRZD6.

The protein resides in the secreted. In terms of biological role, soluble frizzled-related proteins (sFRPS) function as modulators of Wnt signaling through direct interaction with Wnts. They have a role in regulating cell growth and differentiation in specific cell types. SFRP1 decreases intracellular beta-catenin levels. Has antiproliferative effects on vascular cells, in vitro and in vivo, and can induce, in vivo, an angiogenic response. In vascular cell cycle, delays the G1 phase and entry into the S phase. In kidney development, inhibits tubule formation and bud growth in metanephroi. Inhibits WNT1/WNT4-mediated TCF-dependent transcription. This Rattus norvegicus (Rat) protein is Secreted frizzled-related protein 1 (Sfrp1).